Consider the following 558-residue polypeptide: MILDILPRVGLKPKDYFLKFVLPAVLASLFMVVLGFIYFDGITRLLVLALPLLLLGGALGYPYIELDSQKQKINERLHVYITKFGVLSITDLDNKALLELLSVEKEELGQLAEESRKIYVLVKRWNQSLAGSCRFLANRTPSSQFGDFLDRMAYSIDSGQELKEFLAGEQDIVMDEYAGFYERALYSLDNFKEMYVSAITSVSFFVTFAIIAPFLLPYDFVTMVTVAIFIFMIIEVILIYSIKNKLPYDRLWHTGEKPTAIDRKLRKWLIISVGLTILASIVLFWGKYIYEAPQLLKIPYELIFSIAMTPLMLGGYMAQREESLVIRKENNFPDFLRSLGDSVSAKGGGTLESLGYLCTNDFGPLTKDLVALHRRLSIRINGQKSWKYFGHDTCSYLIQLFSEMYERCTYLGGNSGQASHIIGKNFRKILRLRRSKYQNVNQFAGVMYGLSGGMALTLFASYGVASMVNGLYSSLDIPDTMLSMVHVVAPSDFGFISYMMYGTLIIYALCSSYLIKLMDGGHYQVSLLHFSTMVWISSIVAVVTEMVTNSLLKATIPV.

A run of 9 helical transmembrane segments spans residues 17-37 (FLKFVLPAVLASLFMVVLGFI), 45-65 (LLVLALPLLLLGGALGYPYIE), 196-216 (VSAITSVSFFVTFAIIAPFLL), 220-240 (FVTMVTVAIFIFMIIEVILIY), 269-289 (LIISVGLTILASIVLFWGKYI), 298-318 (IPYELIFSIAMTPLMLGGYMA), 443-463 (FAGVMYGLSGGMALTLFASYG), 495-515 (FISYMMYGTLIIYALCSSYLI), and 527-547 (LLHFSTMVWISSIVAVVTEMV).

It to M.jannaschii FlaJ.

Its subcellular location is the cell membrane. It localises to the archaeal flagellum. In Methanococcus voltae, this protein is Flagella accessory protein J (flaJ).